A 229-amino-acid polypeptide reads, in one-letter code: Histidine biosynthesis bifunctional protein HisIE (229 aa).

Residues Met1–Val127 form a phosphoribosyl-AMP cyclohydrolase region. Positions Val128–Ser229 are phosphoribosyl-ATP pyrophosphohydrolase.

This sequence in the N-terminal section; belongs to the PRA-CH family. It in the C-terminal section; belongs to the PRA-PH family.

Its subcellular location is the cytoplasm. The catalysed reaction is 1-(5-phospho-beta-D-ribosyl)-ATP + H2O = 1-(5-phospho-beta-D-ribosyl)-5'-AMP + diphosphate + H(+). It catalyses the reaction 1-(5-phospho-beta-D-ribosyl)-5'-AMP + H2O = 1-(5-phospho-beta-D-ribosyl)-5-[(5-phospho-beta-D-ribosylamino)methylideneamino]imidazole-4-carboxamide. It functions in the pathway amino-acid biosynthesis; L-histidine biosynthesis; L-histidine from 5-phospho-alpha-D-ribose 1-diphosphate: step 2/9. The protein operates within amino-acid biosynthesis; L-histidine biosynthesis; L-histidine from 5-phospho-alpha-D-ribose 1-diphosphate: step 3/9. This Wolinella succinogenes (strain ATCC 29543 / DSM 1740 / CCUG 13145 / JCM 31913 / LMG 7466 / NCTC 11488 / FDC 602W) (Vibrio succinogenes) protein is Histidine biosynthesis bifunctional protein HisIE.